The sequence spans 292 residues: UPF0749 protein Mb1856 (292 aa).

Residues 1 to 28 (MSENRPEPVAAETSAATTARHSQADAGA) form the signal peptide. The disordered stretch occupies residues 1–30 (MSENRPEPVAAETSAATTARHSQADAGAHD). 3 helical membrane passes run 68–88 (VFGTLAILLCLVLGVAIVTQV), 152–172 (AALSILVGAVGATGPGVMITI), and 229–249 (VLSPPYSILAIGDPPTLAAAM).

It belongs to the UPF0749 family.

It localises to the cell membrane. The protein is UPF0749 protein Mb1856 of Mycobacterium bovis (strain ATCC BAA-935 / AF2122/97).